The chain runs to 387 residues: Pepsin-3 (387 aa).

Residues 1-15 form the signal peptide; sequence MKWLLLLGLLALSEC. Positions 16–59 are cleaved as a propeptide — activation peptide; the sequence is IIHKVPLVRKKSLRKNLIEKGLLKDYLKTHTPNLATKYLPKAAF. Residues 75-384 form the Peptidase A1 domain; sequence YFGTIGIGTP…DRANNQLGLA (310 aa). Asp-93 is an active-site residue. Cystine bridges form between Cys-106–Cys-111 and Cys-267–Cys-271. Asp-276 is a catalytic residue. Cys-310 and Cys-343 are disulfide-bonded.

Belongs to the peptidase A1 family.

The protein resides in the secreted. It carries out the reaction Preferential cleavage: hydrophobic, preferably aromatic, residues in P1 and P1' positions. Cleaves 1-Phe-|-Val-2, 4-Gln-|-His-5, 13-Glu-|-Ala-14, 14-Ala-|-Leu-15, 15-Leu-|-Tyr-16, 16-Tyr-|-Leu-17, 23-Gly-|-Phe-24, 24-Phe-|-Phe-25 and 25-Phe-|-Tyr-26 bonds in the B chain of insulin.. Shows particularly broad specificity; although bonds involving phenylalanine and leucine are preferred, many others are also cleaved to some extent. The sequence is that of Pepsin-3 from Oryctolagus cuniculus (Rabbit).